Consider the following 167-residue polypeptide: MLGLVSFDATFFFQLANTLIMFLILKHFLFQPVTEFMDKRTKAIEESIAEAELKNKESNELKAQYESKLTEIKKERTQIIDEAVRNAQKRGDEIVSAAGVEARRTIEKATAEIEREKQKMMNELKGEISQLAIAAAQKVIEKDLDQSAHQQMIQQFIDKAGETQWQN.

The helical transmembrane segment at Thr-10 to Phe-30 threads the bilayer.

Belongs to the ATPase B chain family. F-type ATPases have 2 components, F(1) - the catalytic core - and F(0) - the membrane proton channel. F(1) has five subunits: alpha(3), beta(3), gamma(1), delta(1), epsilon(1). F(0) has three main subunits: a(1), b(2) and c(10-14). The alpha and beta chains form an alternating ring which encloses part of the gamma chain. F(1) is attached to F(0) by a central stalk formed by the gamma and epsilon chains, while a peripheral stalk is formed by the delta and b chains.

The protein localises to the cell membrane. In terms of biological role, f(1)F(0) ATP synthase produces ATP from ADP in the presence of a proton or sodium gradient. F-type ATPases consist of two structural domains, F(1) containing the extramembraneous catalytic core and F(0) containing the membrane proton channel, linked together by a central stalk and a peripheral stalk. During catalysis, ATP synthesis in the catalytic domain of F(1) is coupled via a rotary mechanism of the central stalk subunits to proton translocation. Functionally, component of the F(0) channel, it forms part of the peripheral stalk, linking F(1) to F(0). In Alkaliphilus oremlandii (strain OhILAs) (Clostridium oremlandii (strain OhILAs)), this protein is ATP synthase subunit b.